The following is a 200-amino-acid chain: dITP/XTP pyrophosphatase (200 aa).

8 to 13 serves as a coordination point for substrate; it reads TRNAGK. The Proton acceptor role is filled by Asp-72. Asp-72 contacts Mg(2+). Substrate-binding positions include Ser-73, 155–158, Lys-178, and 183–184; these read FGYD and HR.

It belongs to the HAM1 NTPase family. As to quaternary structure, homodimer. The cofactor is Mg(2+).

The enzyme catalyses XTP + H2O = XMP + diphosphate + H(+). It carries out the reaction dITP + H2O = dIMP + diphosphate + H(+). It catalyses the reaction ITP + H2O = IMP + diphosphate + H(+). Pyrophosphatase that catalyzes the hydrolysis of nucleoside triphosphates to their monophosphate derivatives, with a high preference for the non-canonical purine nucleotides XTP (xanthosine triphosphate), dITP (deoxyinosine triphosphate) and ITP. Seems to function as a house-cleaning enzyme that removes non-canonical purine nucleotides from the nucleotide pool, thus preventing their incorporation into DNA/RNA and avoiding chromosomal lesions. The sequence is that of dITP/XTP pyrophosphatase from Streptomyces avermitilis (strain ATCC 31267 / DSM 46492 / JCM 5070 / NBRC 14893 / NCIMB 12804 / NRRL 8165 / MA-4680).